A 53-amino-acid chain; its full sequence is MVRLIVIFLIIAIIAAIFGFGGVAEGAADIAKIIFYIFLVLLVISVLSRLFRK.

The next 2 membrane-spanning stretches (helical) occupy residues 4–24 and 27–47; these read LIVIFLIIAIIAAIFGFGGVA and AADIAKIIFYIFLVLLVISVL.

Belongs to the UPF0391 family.

It is found in the cell membrane. In Christiangramia forsetii (strain DSM 17595 / CGMCC 1.15422 / KT0803) (Gramella forsetii), this protein is UPF0391 membrane protein GFO_1615.